Consider the following 132-residue polypeptide: Ribosome-binding factor A (132 aa).

Belongs to the RbfA family. As to quaternary structure, monomer. Binds 30S ribosomal subunits, but not 50S ribosomal subunits or 70S ribosomes.

The protein localises to the cytoplasm. Functionally, one of several proteins that assist in the late maturation steps of the functional core of the 30S ribosomal subunit. Associates with free 30S ribosomal subunits (but not with 30S subunits that are part of 70S ribosomes or polysomes). Required for efficient processing of 16S rRNA. May interact with the 5'-terminal helix region of 16S rRNA. The polypeptide is Ribosome-binding factor A (Prochlorococcus marinus subsp. pastoris (strain CCMP1986 / NIES-2087 / MED4)).